Here is a 318-residue protein sequence, read N- to C-terminus: Acetyl-coenzyme A carboxylase carboxyl transferase subunit alpha (318 aa).

Positions 38–292 (KLEKRLAKLE…NKTITKSLHA (255 aa)) constitute a CoA carboxyltransferase C-terminal domain.

This sequence belongs to the AccA family. In terms of assembly, acetyl-CoA carboxylase is a heterohexamer composed of biotin carboxyl carrier protein (AccB), biotin carboxylase (AccC) and two subunits each of ACCase subunit alpha (AccA) and ACCase subunit beta (AccD).

It is found in the cytoplasm. The catalysed reaction is N(6)-carboxybiotinyl-L-lysyl-[protein] + acetyl-CoA = N(6)-biotinyl-L-lysyl-[protein] + malonyl-CoA. It functions in the pathway lipid metabolism; malonyl-CoA biosynthesis; malonyl-CoA from acetyl-CoA: step 1/1. Its function is as follows. Component of the acetyl coenzyme A carboxylase (ACC) complex. First, biotin carboxylase catalyzes the carboxylation of biotin on its carrier protein (BCCP) and then the CO(2) group is transferred by the carboxyltransferase to acetyl-CoA to form malonyl-CoA. The polypeptide is Acetyl-coenzyme A carboxylase carboxyl transferase subunit alpha (Listeria monocytogenes serotype 4b (strain CLIP80459)).